The chain runs to 115 residues: Histone H2A-Bbd type 1 (115 aa).

The disordered stretch occupies residues 1–21 (MPRRRRRRGSSGAGGRGRTCS). Positions 87–115 (LLDMVVHNDRLLSTLFNTTTISQVAPGED) are docking domain.

Belongs to the histone H2A family. The nucleosome is a histone octamer containing two molecules each of H2A, H2B, H3 and H4 assembled in one H3-H4 heterotetramer and two H2A-H2B heterodimers. May be incorporated into a proportion of nucleosomes, replacing one or more H2A molecules. Present in mature sperm.

It is found in the nucleus. Its subcellular location is the chromosome. In terms of biological role, atypical histone H2A which can replace conventional H2A in some nucleosomes and is associated with active transcription and mRNA processing. Nucleosomes wrap and compact DNA into chromatin, limiting DNA accessibility to the cellular machineries which require DNA as a template. Histones thereby play a central role in transcription regulation, DNA repair, DNA replication and chromosomal stability. Nucleosomes containing this histone are less rigid and organize less DNA than canonical nucleosomes in vivo. They are enriched in actively transcribed genes and associate with the elongating form of RNA polymerase. They associate with spliceosome components and are required for mRNA splicing. The protein is Histone H2A-Bbd type 1 of Homo sapiens (Human).